A 69-amino-acid polypeptide reads, in one-letter code: MSYYNKRNQEPLPKEDVSTWECTKEDCNGWTRKNFASSDTPLCPLCGSKMVDGIRSLVNLQNNSQTKTS.

Interacts with the RNA polymerase core.

This is an uncharacterized protein from Bacillus subtilis (strain 168).